We begin with the raw amino-acid sequence, 96 residues long: MAKYEILYIIRPNIEEEAKNALVARFDSILTDNGATVVESKDWEKRRLAYEIQDFREGIYHVVNVEANDATALNEFDRLSKINGDILRHMIVKLDA.

It belongs to the bacterial ribosomal protein bS6 family.

In terms of biological role, binds together with bS18 to 16S ribosomal RNA. In Streptococcus thermophilus (strain ATCC BAA-491 / LMD-9), this protein is Small ribosomal subunit protein bS6.